Reading from the N-terminus, the 126-residue chain is Small ribosomal subunit protein bS6 (126 aa).

The interval Gln-104 to Ala-126 is disordered.

The protein belongs to the bacterial ribosomal protein bS6 family.

Its function is as follows. Binds together with bS18 to 16S ribosomal RNA. The polypeptide is Small ribosomal subunit protein bS6 (Coxiella burnetii (strain Dugway 5J108-111)).